Reading from the N-terminus, the 182-residue chain is Inner membrane-spanning protein YciB (182 aa).

The next 5 helical transmembrane spans lie at 22-42 (IYAA…VVWV), 53-73 (ITLV…NEAF), 76-96 (WKVT…QFLF), 121-141 (FSWG…AFYL), and 149-169 (FKVF…GIYI).

This sequence belongs to the YciB family.

The protein resides in the cell inner membrane. Plays a role in cell envelope biogenesis, maintenance of cell envelope integrity and membrane homeostasis. The chain is Inner membrane-spanning protein YciB from Tolumonas auensis (strain DSM 9187 / NBRC 110442 / TA 4).